The chain runs to 780 residues: Chloride channel protein CLC-b (780 aa).

Residues 1-28 (MVEEDLNQIGGNSNYNGEGGDPESNTLN) are disordered. Helical transmembrane passes span 87 to 107 (TLAC…NLAV), 130 to 150 (GLMV…VLCV), 177 to 197 (FGAT…AAGL), 205 to 225 (LVHI…DNHR), 247 to 267 (GSAA…LFAL), 277 to 297 (ALLW…REFI), 327 to 347 (VTDI…GSLY), 370 to 390 (VLLS…LPFL), 452 to 472 (MGSL…TFGI), 477 to 497 (GLFL…GAAM), 509 to 529 (AVLG…SLCV), and 530 to 550 (IFLE…VLLI). 2 consecutive CBS domains span residues 594–663 (AKPP…FLTE) and 708–770 (TNTT…AFPL). Residues 735-755 (HLLIVPKIQASGMCPVVGILT) traverse the membrane as a helical segment.

This sequence belongs to the chloride channel (TC 2.A.49) family. In terms of assembly, homodimer. Interacts with PP2A5. Broadly expressed in the plant.

It is found in the membrane. In terms of biological role, voltage-gated chloride channel. In Arabidopsis thaliana (Mouse-ear cress), this protein is Chloride channel protein CLC-b (CLC-B).